Here is a 207-residue protein sequence, read N- to C-terminus: N-(5'-phosphoribosyl)anthranilate isomerase (207 aa).

The protein belongs to the TrpF family.

It carries out the reaction N-(5-phospho-beta-D-ribosyl)anthranilate = 1-(2-carboxyphenylamino)-1-deoxy-D-ribulose 5-phosphate. Its pathway is amino-acid biosynthesis; L-tryptophan biosynthesis; L-tryptophan from chorismate: step 3/5. This is N-(5'-phosphoribosyl)anthranilate isomerase from Legionella pneumophila (strain Lens).